Here is a 294-residue protein sequence, read N- to C-terminus: MKKPFNVLAIIGKPRDQQAIQTHKEIYHWLRSLGYTVFIDDRLREILTDLPTEHFASLIELGKKADLAIVVGGDGNMLGAARVLSRFDISVIGVNRGNLGFLTDLNPEDFQQRLQEVLDGHYLQETRFLLEAEIHRHGQVKSHNAALNEAVLHPGKIAHMIEFEVYIDDNFAFSQRSDGLIVSTPTGSTAYSLSGGGPILSPSLNAITLVPMFPHTLSCRPLVVGGNQRIKLVVSPENRGTQEVSCDGQVSLPVSPGDEIHIYQSPNVLKLIHPQDYSYYHVLRTKLGWSSKLF.

Residue Asp-74 is the Proton acceptor of the active site. NAD(+) contacts are provided by residues 74-75 (DG), 148-149 (NE), His-159, Arg-176, Asp-178, 189-194 (TAYSLS), and Gln-249.

Belongs to the NAD kinase family. The cofactor is a divalent metal cation.

Its subcellular location is the cytoplasm. The enzyme catalyses NAD(+) + ATP = ADP + NADP(+) + H(+). Its function is as follows. Involved in the regulation of the intracellular balance of NAD and NADP, and is a key enzyme in the biosynthesis of NADP. Catalyzes specifically the phosphorylation on 2'-hydroxyl of the adenosine moiety of NAD to yield NADP. The sequence is that of NAD kinase from Vibrio cholerae serotype O1 (strain ATCC 39541 / Classical Ogawa 395 / O395).